Consider the following 437-residue polypeptide: Glutamate-1-semialdehyde 2,1-aminomutase (437 aa).

Residue Lys-274 is modified to N6-(pyridoxal phosphate)lysine.

Belongs to the class-III pyridoxal-phosphate-dependent aminotransferase family. HemL subfamily. Homodimer. The cofactor is pyridoxal 5'-phosphate.

The protein resides in the cytoplasm. The catalysed reaction is (S)-4-amino-5-oxopentanoate = 5-aminolevulinate. It participates in porphyrin-containing compound metabolism; protoporphyrin-IX biosynthesis; 5-aminolevulinate from L-glutamyl-tRNA(Glu): step 2/2. This is Glutamate-1-semialdehyde 2,1-aminomutase from Verminephrobacter eiseniae (strain EF01-2).